The chain runs to 400 residues: CCA-adding enzyme (400 aa).

2 residues coordinate ATP: Gly-27 and Arg-30. Gly-27 and Arg-30 together coordinate CTP. Mg(2+)-binding residues include Asp-40 and Asp-42. Residues Arg-111, Asp-154, Arg-157, Arg-160, and Arg-163 each coordinate ATP. Residues Arg-111, Asp-154, Arg-157, Arg-160, and Arg-163 each contribute to the CTP site.

This sequence belongs to the tRNA nucleotidyltransferase/poly(A) polymerase family. Bacterial CCA-adding enzyme type 3 subfamily. Homodimer. Requires Mg(2+) as cofactor.

The catalysed reaction is a tRNA precursor + 2 CTP + ATP = a tRNA with a 3' CCA end + 3 diphosphate. It catalyses the reaction a tRNA with a 3' CCA end + 2 CTP + ATP = a tRNA with a 3' CCACCA end + 3 diphosphate. Its function is as follows. Catalyzes the addition and repair of the essential 3'-terminal CCA sequence in tRNAs without using a nucleic acid template. Adds these three nucleotides in the order of C, C, and A to the tRNA nucleotide-73, using CTP and ATP as substrates and producing inorganic pyrophosphate. tRNA 3'-terminal CCA addition is required both for tRNA processing and repair. Also involved in tRNA surveillance by mediating tandem CCA addition to generate a CCACCA at the 3' terminus of unstable tRNAs. While stable tRNAs receive only 3'-terminal CCA, unstable tRNAs are marked with CCACCA and rapidly degraded. The polypeptide is CCA-adding enzyme (Bacillus pumilus (strain SAFR-032)).